Here is a 138-residue protein sequence, read N- to C-terminus: MAALPDKEKLLRNFTRCANWEEKYLYIIDLGQRLAELNTQDRNPQNRIQGCQSQVWIVIGRNADGIIELQGDSDAAIVKGLMAVVFILYHHMTAQDIVHFDVRPWFEKMALTQHLTPSRSQGLEAMIRAIRAKAATLS.

Catalysis depends on cysteine 51, which acts as the Cysteine persulfide intermediate.

It belongs to the SufE family. Homodimer. Interacts with SufS.

It is found in the cytoplasm. It functions in the pathway cofactor biosynthesis; iron-sulfur cluster biosynthesis. Participates in cysteine desulfuration mediated by SufS. Cysteine desulfuration mobilizes sulfur from L-cysteine to yield L-alanine and constitutes an essential step in sulfur metabolism for biosynthesis of a variety of sulfur-containing biomolecules. Functions as a sulfur acceptor for SufS, by mediating the direct transfer of the sulfur atom from the S-sulfanylcysteine of SufS, an intermediate product of cysteine desulfuration process. The sequence is that of Cysteine desulfuration protein SufE from Salmonella arizonae (strain ATCC BAA-731 / CDC346-86 / RSK2980).